A 171-amino-acid polypeptide reads, in one-letter code: T-cell surface glycoprotein CD3 delta chain (171 aa).

The N-terminal stretch at 1–21 (MEHSRFLSGLILAAFLSRVSP) is a signal peptide. Topologically, residues 22 to 104 (YEVEMEELED…NCVELDSATL (83 aa)) are extracellular. Cys37 and Cys72 are oxidised to a cystine. A glycan (N-linked (GlcNAc...) asparagine) is linked at Asn38. A helical transmembrane segment spans residues 105–125 (AGIIVTDIIATLLLALGVYCF). At 126-171 (AGHEMGRFSRAADTQDLLRNDQLYQPLRDRNDGQYSRLGENWARNK) the chain is on the cytoplasmic side. The ITAM domain maps to 138–166 (DTQDLLRNDQLYQPLRDRNDGQYSRLGEN). Phosphotyrosine occurs at positions 149 and 160.

As to quaternary structure, the TCR-CD3 complex is composed of a CD3D/CD3E and a CD3G/CD3E heterodimers that preferentially associate with TCRalpha and TCRbeta, respectively, to form TCRalpha/CD3E/CD3G and TCRbeta/CD3G/CD3E trimers. In turn, the hexamer interacts with CD3Z homodimer to form the TCR-CD3 complex. Alternatively, TCRalpha and TCRbeta can be replaced by TCRgamma and TCRdelta. Interacts with coreceptors CD4 and CD8. Phosphorylated on Tyr residues after T-cell receptor triggering by LCK in association with CD4/CD8. In terms of tissue distribution, CD3D is mostly present on T-lymphocytes with its TCR-CD3 partners. Present also in fetal NK-cells.

Its subcellular location is the cell membrane. Its function is as follows. Part of the TCR-CD3 complex present on T-lymphocyte cell surface that plays an essential role in adaptive immune response. When antigen presenting cells (APCs) activate T-cell receptor (TCR), TCR-mediated signals are transmitted across the cell membrane by the CD3 chains CD3D, CD3E, CD3G and CD3Z. All CD3 chains contain immunoreceptor tyrosine-based activation motifs (ITAMs) in their cytoplasmic domain. Upon TCR engagement, these motifs become phosphorylated by Src family protein tyrosine kinases LCK and FYN, resulting in the activation of downstream signaling pathways. In addition of this role of signal transduction in T-cell activation, CD3D plays an essential role in thymocyte differentiation. Indeed, participates in correct intracellular TCR-CD3 complex assembly and surface expression. In absence of a functional TCR-CD3 complex, thymocytes are unable to differentiate properly. Interacts with CD4 and CD8 and thus serves to establish a functional link between the TCR and coreceptors CD4 and CD8, which is needed for activation and positive selection of CD4 or CD8 T-cells. In Sus scrofa (Pig), this protein is T-cell surface glycoprotein CD3 delta chain (CD3D).